A 219-amino-acid chain; its full sequence is Dehydration-responsive element-binding protein 1E (219 aa).

Residues Met-1–Val-19 are compositionally biased toward low complexity. Positions Met-1–Lys-44 are disordered. Residues Val-52–Ala-109 constitute a DNA-binding region (AP2/ERF).

It belongs to the AP2/ERF transcription factor family. ERF subfamily.

Its subcellular location is the nucleus. Transcriptional activator that binds specifically to the DNA sequence 5'-[AG]CCGAC-3'. Binding to the C-repeat/DRE element mediates high salinity- and dehydration-inducible transcription. This chain is Dehydration-responsive element-binding protein 1E (DREB1E), found in Oryza sativa subsp. indica (Rice).